A 288-amino-acid chain; its full sequence is MFIQEPKKLIDTGEIGNASTGDILFDGGNKINSDFNAIYNAFGDQRKMAVANGTGADGQIIHATGYYQKHSITEYATPVKVGTRHDIDTSTVGVKVIIERGELGDCVEFINSNGSISVTNPLTIQAIDSIKGVSGNLVVTSPYSKVTLRCISSDNSTSVWNYSIESMFGQKESPAEGTWNISTSGSVDIPLFHRTEYNMAKLLVTCQSVDGRKIKTAEINILVDTVNSEVISSEYAVMRVGNETEEDEIANIAFSIKENYVTATISSSTVGMRAAVKVIATQKIGVAQ.

Positions 20–80 form a coiled coil; sequence TGDILFDGGN…SITEYATPVK (61 aa).

As to quaternary structure, homotrimer. The gp9 trimer interacts with the long tail fiber (LTF) that comprises gp34 trimer, gp35, gp36 and a gp37 trimer. Part of the baseplate macromolecular complex which consists of gp5, gp5.4, gp27 (central spike complex); gp6, gp25, gp53 (inner baseplate); gp7, gp8 (intermediate baseplate); gp9, gp10, gp11, gp12 (peripheral); gp48 and gp54 (proximal region of the tail tube).

The protein localises to the virion. In terms of biological role, peripheral baseplate protein that is part of the tail fiber network. Connects the long tail fibers to the baseplate and, after virus attachment to a host cell, probably changes its conformation to trigger the signal for tail contraction. Involved in the tail assembly. The sequence is that of Baseplate protein gp9 (9) from Enterobacteria phage T4 (Bacteriophage T4).